The sequence spans 200 residues: Small ribosomal subunit protein uS4 (200 aa).

Positions 22–41 (TGKELQKRPYAPGQHGPNQR) are disordered. Residues 92–152 (SRLDNLVYRM…EKSRNLQVIK (61 aa)) enclose the S4 RNA-binding domain.

This sequence belongs to the universal ribosomal protein uS4 family. In terms of assembly, part of the 30S ribosomal subunit. Contacts protein S5. The interaction surface between S4 and S5 is involved in control of translational fidelity.

Functionally, one of the primary rRNA binding proteins, it binds directly to 16S rRNA where it nucleates assembly of the body of the 30S subunit. In terms of biological role, with S5 and S12 plays an important role in translational accuracy. This is Small ribosomal subunit protein uS4 from Halalkalibacterium halodurans (strain ATCC BAA-125 / DSM 18197 / FERM 7344 / JCM 9153 / C-125) (Bacillus halodurans).